Reading from the N-terminus, the 142-residue chain is Neurofilament heavy polypeptide (142 aa).

The region spanning 1-142 is the IF rod domain; sequence MRGAVLRLGA…EAAKVNTDAM (142 aa). Residues 26–74 adopt a coiled-coil conformation; the sequence is IAHVRQRLDDEARQRQEAEAAARALARFAQEAEAARVELQKKAQALQEE.

This sequence belongs to the intermediate filament family. As to quaternary structure, forms heterodimers with NEFL; which can further hetero-oligomerize (in vitro). Forms heterodimers with INA (in vitro). There are a number of repeats of the tripeptide K-S-P, NFH is phosphorylated on a number of the serines in this motif. It is thought that phosphorylation of NFH results in the formation of interfilament cross bridges that are important in the maintenance of axonal caliber. Post-translationally, phosphorylation seems to play a major role in the functioning of the larger neurofilament polypeptides (NF-M and NF-H), the levels of phosphorylation being altered developmentally and coincidentally with a change in the neurofilament function. In terms of processing, phosphorylated in the head and rod regions by the PKC kinase PKN1, leading to the inhibition of polymerization.

It is found in the cytoplasm. Its subcellular location is the cytoskeleton. It localises to the cell projection. The protein resides in the axon. Its function is as follows. Neurofilaments usually contain three intermediate filament proteins: NEFL, NEFM, and NEFH which are involved in the maintenance of neuronal caliber. NEFH has an important function in mature axons that is not subserved by the two smaller NF proteins. May additionally cooperate with the neuronal intermediate filament proteins PRPH and INA to form neuronal filamentous networks. The sequence is that of Neurofilament heavy polypeptide (NEFH) from Sus scrofa (Pig).